The primary structure comprises 725 residues: MEVTNLIEKCTKHSKDFATEVKKLWNDELSSESGLSRKTRNVIRNILRDITKSLTTDKKSKCFRILERSTINGEQIKDVYKTIFNNGVDVESRINTTGKYVLFTVMTYVAAELRLIKSDEIFALLSRFFNMICDIHRKYGCGNMFVGIPAALIILLEIDHINKLFSVFSTRYDAKAYLYTEYFLFLNINHYLLSGSDLFINVAYGAVSFSSPISVPDYIMEALTFKACDHIMKSGDLKYTYAFTKKVKDLFNTKSDSIYQYVRLHEMSYDGVSEDTDDDDEVFAILNLSIDSSVDRYRNRVLLLTPEVASLRKEYSDVEPDYKYLMDEEVPAYDKHLPKPITNTGIEEPHATGGDEDQPIKVVHPPNNDKDDAIKPYNPLEDPNYVPTITRTAIGIADYQLVINKLIEWLDKCEEECGNSGEFKTELEEAKRKLTELNAELSDKLSKIRTLERDSVYKTERIDRLTKEIKEHRDIQNGTDDGSDLLEIDKKTIRELRESLDREREMRSELEKELDTIRNGKVDGSCQRELELSRMWLKQRDDDLRAEIDKRRNVEWELSRLRRDIKECDKYKEDLDKAKTTISNYVSKISTLESEIAKYQQDRDTLSVVRRELEEERRRVRDLESRLDECTRNQEDTQEVDALRSRIRELENKLTDCIESGGGNLTEISRLQSKISDLERQLSECRENATEISRLQSRISDLERQLNDCRRNNETNAETERDATS.

Coiled coils occupy residues 418-521 (GNSG…RNGK) and 547-719 (EIDK…NAET). Repeat copies occupy residues 609-635 (VRRE…RNQE), 636-663 (DTQE…SGGG), 664-687 (NLTE…ECRE), and 699-725 (ISDL…DATS). The 4 X approximate tandem repeats stretch occupies residues 609-718 (VRRELEEERR…CRRNNETNAE (110 aa)).

The protein belongs to the poxviridae A25 protein family. Interacts (via N-terminus) with protein A26.

The protein localises to the virion. Its function is as follows. Structural protein that forms a matrix surrounding the mature virion (MV) through interaction with protein A26. Presence of protein A25 in the virion structurally prevents direct virus-cell fusion mechanism. This chain is A-type inclusion protein A25, found in Vaccinia virus (strain Western Reserve) (VACV).